A 206-amino-acid chain; its full sequence is Small ribosomal subunit protein uS4 (206 aa).

The disordered stretch occupies residues 18–46; that stretch reads NIWGRPKSPVNRREYGPGQHGQRRKQKMS. Residues 94–154 enclose the S4 RNA-binding domain; sequence RRLDAVVYRA…EKSRQMAALL (61 aa).

The protein belongs to the universal ribosomal protein uS4 family. Part of the 30S ribosomal subunit. Contacts protein S5. The interaction surface between S4 and S5 is involved in control of translational fidelity.

In terms of biological role, one of the primary rRNA binding proteins, it binds directly to 16S rRNA where it nucleates assembly of the body of the 30S subunit. With S5 and S12 plays an important role in translational accuracy. The chain is Small ribosomal subunit protein uS4 from Dinoroseobacter shibae (strain DSM 16493 / NCIMB 14021 / DFL 12).